We begin with the raw amino-acid sequence, 100 residues long: Probable steroid-binding protein 3 (100 aa).

An N-acetylmethionine modification is found at Met1. One can recognise a Cytochrome b5 heme-binding domain in the interval 1-82; sequence MEFTAEQLSQ…LTEKEINTLN (82 aa). The interval 1-82 is sterol-binding; it reads MEFTAEQLSQ…LTEKEINTLN (82 aa).

It belongs to the cytochrome b5 family. MAPR subfamily.

The protein resides in the nucleus. This Arabidopsis thaliana (Mouse-ear cress) protein is Probable steroid-binding protein 3 (MP3).